The following is a 356-amino-acid chain: NADH-quinone oxidoreductase subunit H (356 aa).

8 helical membrane-spanning segments follow: residues Ile18–Ile38, Gly87–Ile107, Val120–Gly140, Ile166–Val186, Ile205–Leu225, Ala265–Ile285, Trp292–Met312, and Phe333–Ile353.

It belongs to the complex I subunit 1 family. NDH-1 is composed of 14 different subunits. Subunits NuoA, H, J, K, L, M, N constitute the membrane sector of the complex.

The protein localises to the cell inner membrane. The catalysed reaction is a quinone + NADH + 5 H(+)(in) = a quinol + NAD(+) + 4 H(+)(out). Its function is as follows. NDH-1 shuttles electrons from NADH, via FMN and iron-sulfur (Fe-S) centers, to quinones in the respiratory chain. The immediate electron acceptor for the enzyme in this species is believed to be ubiquinone. Couples the redox reaction to proton translocation (for every two electrons transferred, four hydrogen ions are translocated across the cytoplasmic membrane), and thus conserves the redox energy in a proton gradient. This subunit may bind ubiquinone. The sequence is that of NADH-quinone oxidoreductase subunit H from Bradyrhizobium sp. (strain ORS 278).